Consider the following 292-residue polypeptide: GID complex substrate-recognition subunit 10 (292 aa).

This sequence belongs to the GID4/VID24 family. As to quaternary structure, substrate-recognition component of the GID/CTLH ubiquitin ligase complex. In the absence of stress, the complex exists as an inactive anticipatory complex (GID(Ant)), composed of VID30/GID1, the E3 ubiquitin-ligase RMD5/GID2, VID28/GID5, GID8, and the RING-like subunit FYV10/GID9, awaiting a substrate receptor to form the active E3 ligase complex. When cells are shifted to glucose-containing medium, the substrate receptor VID24/GID4 is induced and becomes part of the complex, named GID(SR4). Under osmotic or heat stress, the substrate receptor GID10 is induced and becomes part of the complex, named GID(SR10). Interacts with proteins that have an N-terminal Pro/N-degron, including ART2.

Substrate-recognition component of the GID E3 ligase complex recruiting N termini and catalyzing ubiquitination of proteins targeted for degradation. GID E3 is regulated through assembly with interchangeable N-degron-binding substrate receptors induced by distinct environmental perturbations. Required for the adaptation to osmotic or heat stress. Required for the regulation of protein levels of the adapter protein ART2, a component of the ART-Rsp5 ubiquitin ligase pathway, part of the plasma membrane quality control. Specific for substrates with an N-terminal Pro (Pro/N-degron), including ART2. Has high affinity for the N-terminal sequence Pro-Tyr-Ile-Thr, and also recognizes nonproline residues such as Met-Tyr-Ile-Thr-Val or Val-Cys-Phe-His. The chain is GID complex substrate-recognition subunit 10 from Saccharomyces cerevisiae (strain ATCC 204508 / S288c) (Baker's yeast).